We begin with the raw amino-acid sequence, 183 residues long: Adenine phosphoribosyltransferase (183 aa).

It belongs to the purine/pyrimidine phosphoribosyltransferase family. In terms of assembly, homodimer.

The protein localises to the cytoplasm. It catalyses the reaction AMP + diphosphate = 5-phospho-alpha-D-ribose 1-diphosphate + adenine. The protein operates within purine metabolism; AMP biosynthesis via salvage pathway; AMP from adenine: step 1/1. Catalyzes a salvage reaction resulting in the formation of AMP, that is energically less costly than de novo synthesis. This Shewanella pealeana (strain ATCC 700345 / ANG-SQ1) protein is Adenine phosphoribosyltransferase.